Consider the following 288-residue polypeptide: Bifunctional protein FolD 2 (288 aa).

NADP(+)-binding positions include glycine 166–serine 168 and serine 191.

It belongs to the tetrahydrofolate dehydrogenase/cyclohydrolase family. In terms of assembly, homodimer.

The enzyme catalyses (6R)-5,10-methylene-5,6,7,8-tetrahydrofolate + NADP(+) = (6R)-5,10-methenyltetrahydrofolate + NADPH. It carries out the reaction (6R)-5,10-methenyltetrahydrofolate + H2O = (6R)-10-formyltetrahydrofolate + H(+). It functions in the pathway one-carbon metabolism; tetrahydrofolate interconversion. Its function is as follows. Catalyzes the oxidation of 5,10-methylenetetrahydrofolate to 5,10-methenyltetrahydrofolate and then the hydrolysis of 5,10-methenyltetrahydrofolate to 10-formyltetrahydrofolate. In Frankia casuarinae (strain DSM 45818 / CECT 9043 / HFP020203 / CcI3), this protein is Bifunctional protein FolD 2.